Consider the following 262-residue polypeptide: Ornithine carbamoyltransferase (262 aa).

Carbamoyl phosphate-binding positions include 3 to 7 (STRTR), Gln-30, Arg-54, and 81 to 84 (HPTQ). L-ornithine-binding positions include Asn-114, Asp-178, and 182–183 (SM). Residues 219–222 (HCLP) and Thr-247 each bind carbamoyl phosphate.

It belongs to the aspartate/ornithine carbamoyltransferase superfamily. OTCase family.

It localises to the cytoplasm. It catalyses the reaction carbamoyl phosphate + L-ornithine = L-citrulline + phosphate + H(+). It functions in the pathway amino-acid biosynthesis; L-arginine biosynthesis; L-arginine from L-ornithine and carbamoyl phosphate: step 1/3. Its function is as follows. Reversibly catalyzes the transfer of the carbamoyl group from carbamoyl phosphate (CP) to the N(epsilon) atom of ornithine (ORN) to produce L-citrulline. The protein is Ornithine carbamoyltransferase (argF) of Neisseria polysaccharea.